Here is a 187-residue protein sequence, read N- to C-terminus: UPF0301 protein HSM_1900 (187 aa).

It belongs to the UPF0301 (AlgH) family.

This chain is UPF0301 protein HSM_1900, found in Histophilus somni (strain 2336) (Haemophilus somnus).